A 248-amino-acid chain; its full sequence is tRNA N(3)-methylcytidine methyltransferase trm141 (248 aa).

Tryptophan 23, tyrosine 27, glycine 63, aspartate 86, aspartate 112, and isoleucine 133 together coordinate S-adenosyl-L-methionine.

This sequence belongs to the methyltransferase superfamily. METL family.

Its subcellular location is the cytoplasm. The protein localises to the nucleus. The enzyme catalyses cytidine(32) in tRNA(Ser) + S-adenosyl-L-methionine = N(3)-methylcytidine(32) in tRNA(Ser) + S-adenosyl-L-homocysteine + H(+). In terms of biological role, S-adenosyl-L-methionine-dependent methyltransferase that mediates N(3)-methylcytidine modification of residue 32 of the tRNA anticodon loop of tRNA(Ser). N(3)-methylcytidine methylation by trm141 requires the formation of N(6)-dimethylallyladenosine(37) (i6A37) by tit1 as prerequisite. Does not catalyze N(3)-methylcytidine modification of tRNA(Thr). The chain is tRNA N(3)-methylcytidine methyltransferase trm141 from Schizosaccharomyces pombe (strain 972 / ATCC 24843) (Fission yeast).